We begin with the raw amino-acid sequence, 406 residues long: Phosphopentomutase (406 aa).

The Mn(2+) site is built by aspartate 10, aspartate 305, histidine 310, aspartate 346, histidine 347, and histidine 358.

It belongs to the phosphopentomutase family. Mn(2+) is required as a cofactor.

Its subcellular location is the cytoplasm. It catalyses the reaction 2-deoxy-alpha-D-ribose 1-phosphate = 2-deoxy-D-ribose 5-phosphate. It carries out the reaction alpha-D-ribose 1-phosphate = D-ribose 5-phosphate. The protein operates within carbohydrate degradation; 2-deoxy-D-ribose 1-phosphate degradation; D-glyceraldehyde 3-phosphate and acetaldehyde from 2-deoxy-alpha-D-ribose 1-phosphate: step 1/2. Isomerase that catalyzes the conversion of deoxy-ribose 1-phosphate (dRib-1-P) and ribose 1-phosphate (Rib-1-P) to deoxy-ribose 5-phosphate (dRib-5-P) and ribose 5-phosphate (Rib-5-P), respectively. The polypeptide is Phosphopentomutase (Aliivibrio fischeri (strain MJ11) (Vibrio fischeri)).